The primary structure comprises 398 residues: O-methyltransferase hmp5 (398 aa).

S-adenosyl-L-methionine-binding positions include 233–234 (GG), glutamate 261, and 283–284 (DF). The Proton acceptor role is filled by histidine 303.

Belongs to the class I-like SAM-binding methyltransferase superfamily. Cation-independent O-methyltransferase family.

The protein operates within secondary metabolite biosynthesis. Its function is as follows. O-methyltransferase; part of the gene cluster that mediates the biosynthesis of hypothemycin, a resorcylic acid lactone (RAL) that irreversibly inhibits a subset of protein kinases with a conserved cysteine in the ATP binding site such as human ERK2. The first step is performed by both PKSs hmp3 and hmp8 and leads to the production of 7',8'-dehydrozearalenol (DHZ). The highly reducing PKS hpm8 synthesizes the reduced hexaketide (7S,11S,2E,8E)-7,11-dihydroxy-dodeca-2,8-dienoate, which is transferred downstream to the non-reducing PKS hpm3. Hpm3 then extends the reduced hexaketide to a nonaketide, after which regioselective cyclization and macrolactonization affords DHZ. The next step is the conversion of DHZ into aigialomycin C and is performed by the O-methyltransferase hmp5, the FAD-binding monooxygenase hmp7, and the cytochrome P450 monooxygenase hmp1. The wide substrate tolerance of the hmp5 and hmp7 implies that the reactions from DHZ to aigialomycin C can occur in any order. The steps from aigialomycin C to hypothemycin are less well established. The FAD-linked oxidoreductase hmp9 presumably catalyzes oxidation of the C-6' hydroxyl to a ketone. The timing of this oxidation is important, since the resulting enone functional group is a Michael acceptor that can react spontaneously with glutathione, an abundant metabolite in fungal cells. The glutathione S-transferase hmp2 catalyzes cis-trans isomerization of the 7',8' double bond with equilibrium favoring the trans isomer. The hpm6-encoded transporter might preferentially pump hypothemycin out of the cell relative to the trans isomer aigialomycin A. The cis-to-trans isomerization may be coupled with C-4' hydroxylation, since all known hypothemycin analogs containing the enone functional group also have hydroxyl groups at both C-4' and C-5'. In Hypomyces subiculosus (Nectria subiculosa), this protein is O-methyltransferase hmp5.